A 357-amino-acid polypeptide reads, in one-letter code: Mating-type protein MAT-1 (357 aa).

Positions 53 to 108 (RAKRPLNAFMAFRTYYLKLFPDTQQKNASGFLTQLWGGDPHRNKWALIAKVYSFLR) form a DNA-binding region, alpha box.

Belongs to the MATALPHA1 family.

Its subcellular location is the nucleus. Its function is as follows. Mating type proteins are sequence specific DNA-binding proteins that act as master switches in fungal differentiation by controlling gene expression in a cell type-specific fashion. Transcriptional activator that induces the transcription of alpha-specific genes. The protein is Mating-type protein MAT-1 (MAT1) of Fusarium oxysporum (Fusarium vascular wilt).